The primary structure comprises 334 residues: Ribosomal RNA small subunit methyltransferase H (334 aa).

Residues 53 to 55 (GGH), D72, F99, D122, and H129 each bind S-adenosyl-L-methionine.

The protein belongs to the methyltransferase superfamily. RsmH family.

The protein localises to the cytoplasm. It carries out the reaction cytidine(1402) in 16S rRNA + S-adenosyl-L-methionine = N(4)-methylcytidine(1402) in 16S rRNA + S-adenosyl-L-homocysteine + H(+). Its function is as follows. Specifically methylates the N4 position of cytidine in position 1402 (C1402) of 16S rRNA. The polypeptide is Ribosomal RNA small subunit methyltransferase H (Leptospira interrogans serogroup Icterohaemorrhagiae serovar copenhageni (strain Fiocruz L1-130)).